A 60-amino-acid chain; its full sequence is Myrmicitoxin(1)-Pr4b (60 aa).

Positions 1-23 (MKAIIFLFAVLTVVAIIIPIISG) are cleaved as a signal peptide. Residues 24–33 (EPNAGPHAAS) constitute a propeptide that is removed on maturation. Gln59 bears the Glutamine amide mark.

Belongs to the formicidae venom clade 2 family. As to expression, expressed by the venom gland.

It is found in the secreted. In terms of biological role, toxin that causes a rapid and irreversible paralysis when intrathoracically injected into insects (blowflies). Does not cause spontaneous nocifensive behaviors by intraplantar injection in mice. The chain is Myrmicitoxin(1)-Pr4b from Pogonomyrmex rugosus (Desert harvester ant).